The following is a 425-amino-acid chain: Proline iminopeptidase (425 aa).

The 264-residue stretch at 52–315 (PWLLYLQGGP…EFPALAWAQG (264 aa)) folds into the AB hydrolase-1 domain. Residue Ser146 is the Nucleophile of the active site. Asp351 is a catalytic residue. The active-site Proton donor is the His404.

This sequence belongs to the peptidase S33 family. Homotetramer.

It localises to the cytoplasm. It catalyses the reaction Release of N-terminal proline from a peptide.. Higher activity toward long peptides. Acts on hydroxyproline beta-naphthylamide with almost as high an activity as on proline beta-naphthylamide. The polypeptide is Proline iminopeptidase (pip) (Aeromonas sobria).